Here is a 179-residue protein sequence, read N- to C-terminus: ATP synthase subunit delta (179 aa).

Belongs to the ATPase delta chain family. As to quaternary structure, F-type ATPases have 2 components, F(1) - the catalytic core - and F(0) - the membrane proton channel. F(1) has five subunits: alpha(3), beta(3), gamma(1), delta(1), epsilon(1). F(0) has three main subunits: a(1), b(2) and c(10-14). The alpha and beta chains form an alternating ring which encloses part of the gamma chain. F(1) is attached to F(0) by a central stalk formed by the gamma and epsilon chains, while a peripheral stalk is formed by the delta and b chains.

The protein localises to the cell membrane. Its function is as follows. F(1)F(0) ATP synthase produces ATP from ADP in the presence of a proton or sodium gradient. F-type ATPases consist of two structural domains, F(1) containing the extramembraneous catalytic core and F(0) containing the membrane proton channel, linked together by a central stalk and a peripheral stalk. During catalysis, ATP synthesis in the catalytic domain of F(1) is coupled via a rotary mechanism of the central stalk subunits to proton translocation. In terms of biological role, this protein is part of the stalk that links CF(0) to CF(1). It either transmits conformational changes from CF(0) to CF(1) or is implicated in proton conduction. This is ATP synthase subunit delta from Ureaplasma parvum serovar 3 (strain ATCC 27815 / 27 / NCTC 11736).